The following is a 107-amino-acid chain: uncharacterized protein (107 aa).

Positions 6–107 (KARIDQLVTA…QEMLEVALAS (102 aa)) constitute a Glutaredoxin domain. Lys23 serves as a coordination point for glutathione. Cys31 serves as a coordination point for [2Fe-2S] cluster. Residues Arg60 and 85 to 86 (SD) each bind glutathione.

The protein belongs to the glutaredoxin family. Monothiol subfamily.

This is an uncharacterized protein from Synechocystis sp. (strain ATCC 27184 / PCC 6803 / Kazusa).